The sequence spans 210 residues: Cytochrome c biogenesis ATP-binding export protein CcmA (210 aa).

The ABC transporter domain maps to 3–209 (LTVTNLACAR…PADDPFAGVT (207 aa)). An ATP-binding site is contributed by 35–42 (GPNGIGKT).

The protein belongs to the ABC transporter superfamily. CcmA exporter (TC 3.A.1.107) family. The complex is composed of two ATP-binding proteins (CcmA) and two transmembrane proteins (CcmB).

Its subcellular location is the cell inner membrane. It catalyses the reaction heme b(in) + ATP + H2O = heme b(out) + ADP + phosphate + H(+). Part of the ABC transporter complex CcmAB involved in the biogenesis of c-type cytochromes; once thought to export heme, this seems not to be the case, but its exact role is uncertain. Responsible for energy coupling to the transport system. The protein is Cytochrome c biogenesis ATP-binding export protein CcmA of Cereibacter sphaeroides (strain ATCC 17023 / DSM 158 / JCM 6121 / CCUG 31486 / LMG 2827 / NBRC 12203 / NCIMB 8253 / ATH 2.4.1.) (Rhodobacter sphaeroides).